Consider the following 644-residue polypeptide: Translation factor GUF1, mitochondrial (644 aa).

Residues 1–14 constitute a mitochondrion transit peptide; sequence MLRKAFRYLVPVRC. Residues 46–227 enclose the tr-type G domain; that stretch reads ERYRNFSIVA…AIVDRIPPPT (182 aa). Residues 55–62, 120–124, and 174–177 each bind GTP; these read AHVDHGKS, DTPGH, and NKID.

It belongs to the TRAFAC class translation factor GTPase superfamily. Classic translation factor GTPase family. LepA subfamily.

The protein localises to the mitochondrion inner membrane. It carries out the reaction GTP + H2O = GDP + phosphate + H(+). Its function is as follows. Promotes mitochondrial protein synthesis. May act as a fidelity factor of the translation reaction, by catalyzing a one-codon backward translocation of tRNAs on improperly translocated ribosomes. Binds to mitochondrial ribosomes in a GTP-dependent manner. In Eremothecium gossypii (strain ATCC 10895 / CBS 109.51 / FGSC 9923 / NRRL Y-1056) (Yeast), this protein is Translation factor GUF1, mitochondrial.